A 139-amino-acid chain; its full sequence is Dehydrin DHN1 (139 aa).

Positions 1–139 (MEYQGQHGHA…IKEKLPGGQH (139 aa)) are disordered. The segment covering 23–42 (GHGGFTGGPTGTHGAAGVGG) has biased composition (gly residues). The segment covering 49 to 58 (RDGHKTDGVL) has biased composition (basic and acidic residues). Over residues 59–68 (RRSGSSSSSS) the composition is skewed to low complexity. Residues 83 to 98 (KEKIKEKLPGGAHKDA) show a composition bias toward basic and acidic residues. Residues 99-109 (AGQQQQTAMAG) show a composition bias toward low complexity. Residues 120-139 (TGEKKGVMDKIKEKLPGGQH) show a composition bias toward basic and acidic residues.

The protein belongs to the plant dehydrin family.

The protein is Dehydrin DHN1 (DHN1) of Hordeum vulgare (Barley).